Consider the following 213-residue polypeptide: Uridine kinase (213 aa).

15 to 22 (GASASGKS) is an ATP binding site.

Belongs to the uridine kinase family.

The protein resides in the cytoplasm. The enzyme catalyses uridine + ATP = UMP + ADP + H(+). The catalysed reaction is cytidine + ATP = CMP + ADP + H(+). Its pathway is pyrimidine metabolism; CTP biosynthesis via salvage pathway; CTP from cytidine: step 1/3. It functions in the pathway pyrimidine metabolism; UMP biosynthesis via salvage pathway; UMP from uridine: step 1/1. This chain is Uridine kinase, found in Escherichia coli O157:H7.